A 687-amino-acid polypeptide reads, in one-letter code: SLCO1B3-SLCO1B7 readthrough transcript protein (687 aa).

The Cytoplasmic portion of the chain corresponds to 1 to 29 (MDQHQHLNKTAESASSEKKKTRRCNGFKM). The chain crosses the membrane as a helical span at residues 30–50 (FLAALSFSYIAKALGGIIMKI). At 51–63 (SITQIERRFDISS) the chain is on the extracellular side. A helical membrane pass occupies residues 64–84 (SLAGLIDGSFEIGNLLVIVFV). Topologically, residues 85 to 96 (SYFGSKLHRPKL) are cytoplasmic. A helical membrane pass occupies residues 97-117 (IGIGCLLMGTGSILTSLPHFF). Topologically, residues 118–170 (MGYYRYSKETNIDPSENSTSNLPNCLINQMLSLNRTPSEIIERGCVKESGSHM) are extracellular. 2 N-linked (GlcNAc...) asparagine glycosylation sites follow: Asn134 and Asn151. The helical transmembrane segment at 171–191 (WIYVFMGNMLRGIGETPIVPL) threads the bilayer. Topologically, residues 192-206 (GISYIDDFAKEGHSS) are cytoplasmic. A helical membrane pass occupies residues 207–227 (LYLGTVNVMGMTGLVFAFMLG). At 228–258 (SLFAKMYVDIGYVDLSTIRITPKDSRWVGAW) the chain is on the extracellular side. A helical membrane pass occupies residues 259–279 (WLGFLVSGIVSIISSIPFFFL). Over 280 to 339 (PLNPNKPQKERKVSLFLHVLKTNDKRNQIANLTNRRKYITKNVTGFFQSLKSILTNPLYV) the chain is Cytoplasmic. The chain crosses the membrane as a helical span at residues 340 to 360 (IFVIFTLLHMSSYIASLTYII). Topologically, residues 361-376 (KMVEQQYGWSASKTNF) are extracellular. Residues 377–397 (LLGVLALPAVAIGMFSGGYII) traverse the membrane as a helical segment. The Cytoplasmic segment spans residues 398–409 (KKFKLSLVGLAK). The chain crosses the membrane as a helical span at residues 410–430 (LAFCSATVHLLSQVLYFFLIC). At 431–539 (ESKSVAGLTL…CTRKSYVYFV (109 aa)) the chain is on the extracellular side. Residues 453-508 (DVPLSYCNSECNCDESQWEPVCGNNGITYLSPCLAGCKSSSGNKEPIVFYNCSCVE) enclose the Kazal-like domain. 3 disulfide bridges follow: Cys459/Cys489, Cys465/Cys485, and Cys474/Cys506. N-linked (GlcNAc...) asparagine glycosylation is found at Asn503 and Asn516. A helical transmembrane segment spans residues 540 to 560 (IQVLDAFLCAVGLTSYSVLVI). At 561-568 (RIVQPELK) the chain is on the cytoplasmic side. A helical transmembrane segment spans residues 569–589 (ALAIGFHSMIMRSLGGILVPI). Residues 590–624 (YFGALIDTTCMKWSTNSCGARGACRIYNSTYLGRA) are Extracellular-facing. N-linked (GlcNAc...) asparagine glycosylation occurs at Asn617. A helical transmembrane segment spans residues 625–645 (FFGLKVALIFPVLVLLTVFIF). Residues 646–687 (VVRKKSHGKDTKVLENERQVMDEANLEFLNDSEHFVPSAEEQ) are Cytoplasmic-facing.

This sequence belongs to the organo anion transporter (TC 2.A.60) family. Expressed in the perivenular areas (centrilobular) of the liver (at protein level).

The protein resides in the smooth endoplasmic reticulum membrane. The protein localises to the cell membrane. It is found in the endoplasmic reticulum membrane. The catalysed reaction is 17beta-estradiol 17-O-(beta-D-glucuronate)(out) = 17beta-estradiol 17-O-(beta-D-glucuronate)(in). It carries out the reaction dehydroepiandrosterone 3-sulfate(out) = dehydroepiandrosterone 3-sulfate(in). It catalyses the reaction taurocholate(out) = taurocholate(in). The enzyme catalyses lithocholate(out) = lithocholate(in). Transport activity is induced by farnesoid X receptor (FXR) agonists such as chenodeoxycholate. Functionally, mediates the Na(+)-independent uptake of organic anions. Transports the conjugated steroids 17-beta-glucuronosyl estradiol (17beta-estradiol 17-O-(beta-D-glucuronate) or E2G) and dehydroepiandrosterone 3-sulfate (DHEAS) at the smooth endoplasmic reticulum membrane (SER), granting access to metabolizing enzymes. Contributes to the metabolism of bile acids such as taurocholate (cholyltaurine) and lithocholate, by functioning as a doorway between SER and cytosol, thereby decreasing their circulating levels and protecting the organism from their detergent properties. Regulates access or exit of drugs to the SER lumen. The chain is SLCO1B3-SLCO1B7 readthrough transcript protein from Homo sapiens (Human).